The sequence spans 1098 residues: Probable DNA-directed RNA polymerase (1098 aa).

Residues 1–24 (PIRESVRVSTDRDPDLEDEKREQL) are compositionally biased toward basic and acidic residues. Residues 1–26 (PIRESVRVSTDRDPDLEDEKREQLGE) are disordered. Catalysis depends on residues aspartate 663, lysine 750, and aspartate 915.

The protein belongs to the phage and mitochondrial RNA polymerase family.

It is found in the mitochondrion. It carries out the reaction RNA(n) + a ribonucleoside 5'-triphosphate = RNA(n+1) + diphosphate. Functionally, DNA-dependent RNA polymerase catalyzes the transcription of DNA into RNA using the four ribonucleoside triphosphates as substrates. The protein is Probable DNA-directed RNA polymerase of Zea mays (Maize).